Here is a 64-residue protein sequence, read N- to C-terminus: Large ribosomal subunit protein bL35 (64 aa).

Over residues Met-1–Arg-24 the composition is skewed to basic residues. The disordered stretch occupies residues Met-1–Ala-64. Basic and acidic residues predominate over residues Glu-25 to Lys-35. The segment covering Lys-36–His-45 has biased composition (basic residues).

The protein belongs to the bacterial ribosomal protein bL35 family.

The chain is Large ribosomal subunit protein bL35 from Prosthecochloris aestuarii (strain DSM 271 / SK 413).